A 405-amino-acid polypeptide reads, in one-letter code: Na(+)-translocating NADH-quinone reductase subunit F (405 aa).

A helical transmembrane segment spans residues 3–23; it reads IILGIVMFTVIVLVLALMILF. Positions 32–124 constitute a 2Fe-2S ferredoxin-type domain; sequence GDITIKVNGE…DMDIEVPEEV (93 aa). Positions 67, 73, 76, and 108 each coordinate [2Fe-2S] cluster. The FAD-binding FR-type domain occupies 127–267; the sequence is VKKWECTVIS…SGPFGEFFAK (141 aa). Residues 270 to 387 form a catalytic region; sequence DAEMVFIGGG…PIMNQSVIKM (118 aa).

It belongs to the NqrF family. In terms of assembly, composed of six subunits; NqrA, NqrB, NqrC, NqrD, NqrE and NqrF. [2Fe-2S] cluster serves as cofactor. The cofactor is FAD.

The protein localises to the cell inner membrane. It catalyses the reaction a ubiquinone + n Na(+)(in) + NADH + H(+) = a ubiquinol + n Na(+)(out) + NAD(+). NQR complex catalyzes the reduction of ubiquinone-1 to ubiquinol by two successive reactions, coupled with the transport of Na(+) ions from the cytoplasm to the periplasm. The first step is catalyzed by NqrF, which accepts electrons from NADH and reduces ubiquinone-1 to ubisemiquinone by a one-electron transfer pathway. This Neisseria meningitidis serogroup B (strain ATCC BAA-335 / MC58) protein is Na(+)-translocating NADH-quinone reductase subunit F.